The chain runs to 566 residues: Putative UDP-glucuronate:xylan alpha-glucuronosyltransferase 5 (566 aa).

Residues Leu17 to Leu37 form a helical; Signal-anchor for type II membrane protein membrane-spanning segment. Mn(2+) contacts are provided by Asp372 and Asp374. Substrate contacts are provided by residues Asp372 to Asp374, Asn401 to Gly403, Asn428 to Gln432, and His475 to Lys480. His475 serves as a coordination point for Mn(2+).

This sequence belongs to the glycosyltransferase 8 family. Glycogenin subfamily. Requires Mn(2+) as cofactor.

Its subcellular location is the golgi apparatus membrane. Functionally, may be involved in the substitutions of the xylan backbone in stem glucuronoxylan. This chain is Putative UDP-glucuronate:xylan alpha-glucuronosyltransferase 5 (GUX5), found in Arabidopsis thaliana (Mouse-ear cress).